The chain runs to 238 residues: Large ribosomal subunit protein uL2 (238 aa).

The interval 203 to 223 (GGGAWKHPGKPTTVSRNAPPG) is disordered.

It belongs to the universal ribosomal protein uL2 family. Part of the 50S ribosomal subunit. Forms a bridge to the 30S subunit in the 70S ribosome.

In terms of biological role, one of the primary rRNA binding proteins. Required for association of the 30S and 50S subunits to form the 70S ribosome, for tRNA binding and peptide bond formation. It has been suggested to have peptidyltransferase activity; this is somewhat controversial. Makes several contacts with the 16S rRNA in the 70S ribosome. The chain is Large ribosomal subunit protein uL2 from Methanosarcina barkeri (strain Fusaro / DSM 804).